The primary structure comprises 510 residues: GMP synthase [glutamine-hydrolyzing] (510 aa).

The 191-residue stretch at 5 to 195 (LVIVVDFGGQ…LYEICKADGD (191 aa)) folds into the Glutamine amidotransferase type-1 domain. Residue Cys-82 is the Nucleophile of the active site. Active-site residues include His-169 and Glu-171. The 190-residue stretch at 196-385 (WTMENFLEEQ…LEMPEYLVYR (190 aa)) folds into the GMPS ATP-PPase domain. 223 to 229 (SGGVDSS) is an ATP binding site.

In terms of assembly, homodimer.

The enzyme catalyses XMP + L-glutamine + ATP + H2O = GMP + L-glutamate + AMP + diphosphate + 2 H(+). Its pathway is purine metabolism; GMP biosynthesis; GMP from XMP (L-Gln route): step 1/1. Its function is as follows. Catalyzes the synthesis of GMP from XMP. The protein is GMP synthase [glutamine-hydrolyzing] of Finegoldia magna (strain ATCC 29328 / DSM 20472 / WAL 2508) (Peptostreptococcus magnus).